The chain runs to 280 residues: MMRAKAYAAGTVLNALPTGIGSAFGIEMHTIVKLRPSDELKVFVNGVERRSIVAERILNSMDVTAEVIVESEIPGGSGLGSSSAFVNALICAVKKMKGEELNAFEILRSNARFSLEAGISYTGAFDDASASMLGGFVVSDNRKMRLIRTDEFEGYSAVLIPKFSRGKVDWRRLRERASEVEGAVEAAMRGEYCKAMKLNTEYICKMLGYPLEIAEKGWEKGICCGISGNGPSYVAFGSKNEMEALAETWGEYGRVYVRRVADEPAEDVVIPTPFFRKLDG.

An ATP-binding site is contributed by 74-84; that stretch reads PGGSGLGSSSA.

This sequence belongs to the GHMP kinase family. Archaeal shikimate kinase subfamily.

It localises to the cytoplasm. It catalyses the reaction shikimate + ATP = 3-phosphoshikimate + ADP + H(+). It participates in metabolic intermediate biosynthesis; chorismate biosynthesis; chorismate from D-erythrose 4-phosphate and phosphoenolpyruvate: step 5/7. The sequence is that of Shikimate kinase (aroK) from Archaeoglobus fulgidus (strain ATCC 49558 / DSM 4304 / JCM 9628 / NBRC 100126 / VC-16).